The following is a 345-amino-acid chain: Histone H3-like centromeric protein cpar-1 (345 aa).

The interval 117-246 (NHSNRKPLEE…SRVTKTHNRK (130 aa)) is disordered. The span at 122–149 (KPLEESRRREEPRDRVHESNIDITHRGD) shows a compositional bias: basic and acidic residues. Positions 233–246 (RSGKSRVTKTHNRK) are enriched in basic residues. The segment at 263 to 340 (STDMLIQKAP…TDIQLYRRLC (78 aa)) is H3-like.

It belongs to the histone H3 family. As to quaternary structure, forms a nucleosome-like histone octamer containing two molecules each of H2A, H2B, cpar-1 and H4 assembled in one cpar-1-H4 heterotetramer and two H2A-H2B heterodimers. Cleaved at the onset of meiotic anaphase I, likely by separase sep-1.

The protein localises to the nucleus. Its subcellular location is the chromosome. In terms of biological role, histone H3-like variant which exclusively replaces conventional H3 in the nucleosome core of centromeric chromatin at the inner plate of the kinetochore. Required for recruitment and assembly of kinetochore proteins, mitotic progression and chromosome segregation. May serve as an epigenetic mark that propagates centromere identity through replication and cell division. Not required for chromosome segregation during meiosis. The polypeptide is Histone H3-like centromeric protein cpar-1 (Caenorhabditis briggsae).